Consider the following 376-residue polypeptide: E3 ubiquitin-protein ligase RNF133 (376 aa).

The PA domain occupies 65 to 167 (SSTLKRVAGV…LKGTEIFHLI (103 aa)). A helical membrane pass occupies residues 190–210 (YLVSFVIVTTATLAYFIFYHI). The segment at 256–297 (CVICFEHYKPNDIVRILTCKHFFHKNCIDPWILSHGTCPICK) adopts an RING-type; atypical zinc-finger fold. The segment at 328–376 (TLSPSEEETNNEVSPAGTSDKVIHVEENPTSQNNDSQPHSVVEDVHPSP) is disordered. A compositionally biased stretch (polar residues) spans 355–366 (NPTSQNNDSQPH).

Interacts with E3 ligase UBE2J1. In terms of processing, auto-ubiquitinated.

The protein resides in the endoplasmic reticulum membrane. It carries out the reaction S-ubiquitinyl-[E2 ubiquitin-conjugating enzyme]-L-cysteine + [acceptor protein]-L-lysine = [E2 ubiquitin-conjugating enzyme]-L-cysteine + N(6)-ubiquitinyl-[acceptor protein]-L-lysine.. It functions in the pathway protein modification; protein ubiquitination. Its function is as follows. Has E3 ubiquitin-protein ligase activity. Plays a role in male fecundity through the interaction with the E2 ubituitin-protein ligase UBE2J1. The sequence is that of E3 ubiquitin-protein ligase RNF133 (RNF133) from Macaca fascicularis (Crab-eating macaque).